The primary structure comprises 513 residues: MDEESLQTALRTYDAQLQQVELALGAGLDPSELADLRQLQGDLKELIELTEASLVSVRKSKLLAALDGERPAQEDAEPLALQNAIAETAEVPVAPGAELETVPSRETGPGPTERGQEEDDGEDEEGGAALSGRKVNAPYYSAWGTLEYHNAMIVGTEEADDGSPGVRVLYLYPTHKSLKPCSFFLEGKCRFQENCRFSHGQVVSVDELRPFQDPDLSSLQAGSACLAKRQDGLWYPARITDVDSGYYTVKFDSLLLKETVVEGDSILPPLRTEPAGSSDSDGSDADDPSYARVVEPGAANPGTCSSAFAGWEVHTRGIGSRLLAKMGYEFGKGLGRHAEGRVEPVHAVVLPRGKSLDQCAEILQKRTRAGQAGVSKPPKCRSRGSGPGGRPPPRSVFDFLNEKLKGGAPGAPEVGAAPPGRSGKEVYHASRSTKRALSLRLLQTEEKIEQTQRAIRGIQEALARNAGRHSVTTAQLQEKLAGAQQQLGQLRAQEAGLQREQRKADTHKKMTEF.

Methionine 1 is modified (N-acetylmethionine). The segment at 90-131 (EVPVAPGAELETVPSRETGPGPTERGQEEDDGEDEEGGAALS) is disordered. The segment covering 116 to 126 (QEEDDGEDEEG) has biased composition (acidic residues). The C3H1-type zinc finger occupies 176 to 202 (KSLKPCSFFLEGKCRFQENCRFSHGQV). Residues 267–296 (LPPLRTEPAGSSDSDGSDADDPSYARVVEP) form a disordered region. A phosphoserine mark is found at serine 278 and serine 355. One can recognise a G-patch domain in the interval 315–361 (TRGIGSRLLAKMGYEFGKGLGRHAEGRVEPVHAVVLPRGKSLDQCAE). Disordered regions lie at residues 367–394 (TRAGQAGVSKPPKCRSRGSGPGGRPPPR) and 492–513 (AQEAGLQREQRKADTHKKMTEF). Residues 497 to 513 (LQREQRKADTHKKMTEF) are compositionally biased toward basic and acidic residues.

In terms of assembly, interacts with CHD4/Mi-2; the interaction is direct.

It localises to the nucleus. In terms of biological role, transcription repressor that specifically binds the 5'-GGAG[GA]A[GA]A-3' consensus sequence. Represses transcription by recruiting the chromatin multiprotein complex NuRD to target promoters. Negatively regulates expression of EGFR, a gene involved in cell proliferation, survival and migration. Its ability to repress genes of the EGFR pathway suggest it may act as a tumor suppressor. In Bos taurus (Bovine), this protein is Zinc finger CCCH-type with G patch domain-containing protein (ZGPAT).